The sequence spans 121 residues: MAELNVEIVAVDRNIWSGTAKFLFTRTTVGEIGILPRHIPLVAQLVDDAMVRVEREGEKDLRIAVDGGFLSVTEEGVSILAESAEFESEIDEAAAKQDSESDDPRIAARGRARLRAVGAID.

This sequence belongs to the ATPase epsilon chain family. As to quaternary structure, F-type ATPases have 2 components, CF(1) - the catalytic core - and CF(0) - the membrane proton channel. CF(1) has five subunits: alpha(3), beta(3), gamma(1), delta(1), epsilon(1). CF(0) has three main subunits: a, b and c.

It localises to the cell membrane. Its function is as follows. Produces ATP from ADP in the presence of a proton gradient across the membrane. This Mycobacterium bovis (strain ATCC BAA-935 / AF2122/97) protein is ATP synthase epsilon chain (atpC).